A 255-amino-acid chain; its full sequence is Putative OPA3-like protein CG13603 (255 aa).

A coiled-coil region spans residues 108–154; sequence KENKKNELAQSEKMELTNMLTEMNFRLERQDAQIREMTRVLADLDSR. Residues 168–187 are disordered; the sequence is VPFDPDTPDQSASARNPKKF. A coiled-coil region spans residues 212-241; that stretch reads DGRNRKAKEALQHLDEVAVQLEQSLGEAAT.

This sequence belongs to the OPA3 family.

The protein is Putative OPA3-like protein CG13603 of Drosophila melanogaster (Fruit fly).